We begin with the raw amino-acid sequence, 194 residues long: Leucyl/phenylalanyl-tRNA--protein transferase (194 aa).

It belongs to the L/F-transferase family.

The protein resides in the cytoplasm. It catalyses the reaction N-terminal L-lysyl-[protein] + L-leucyl-tRNA(Leu) = N-terminal L-leucyl-L-lysyl-[protein] + tRNA(Leu) + H(+). The enzyme catalyses N-terminal L-arginyl-[protein] + L-leucyl-tRNA(Leu) = N-terminal L-leucyl-L-arginyl-[protein] + tRNA(Leu) + H(+). It carries out the reaction L-phenylalanyl-tRNA(Phe) + an N-terminal L-alpha-aminoacyl-[protein] = an N-terminal L-phenylalanyl-L-alpha-aminoacyl-[protein] + tRNA(Phe). In terms of biological role, functions in the N-end rule pathway of protein degradation where it conjugates Leu, Phe and, less efficiently, Met from aminoacyl-tRNAs to the N-termini of proteins containing an N-terminal arginine or lysine. This chain is Leucyl/phenylalanyl-tRNA--protein transferase, found in Chlorobaculum tepidum (strain ATCC 49652 / DSM 12025 / NBRC 103806 / TLS) (Chlorobium tepidum).